Consider the following 377-residue polypeptide: Putative holocytochrome-c synthase (377 aa).

Disordered stretches follow at residues 1 to 29 and 111 to 136; these read MTSSETTTDHPRTGKCPIDHSKFARSNEA and QNSEATPAVQPPATCPMSNSNQKPAG. Over residues 7–22 the composition is skewed to basic and acidic residues; sequence TTDHPRTGKCPIDHSK. HRM repeat units lie at residues 114–119 and 124–129; these read EATPAV and TCPMSN.

Belongs to the cytochrome c-type heme lyase family.

It is found in the mitochondrion inner membrane. Its subcellular location is the mitochondrion intermembrane space. The enzyme catalyses holo-[cytochrome c] = apo-[cytochrome c] + heme b. Lyase that catalyzes the covalent linking of the heme group to the cytochrome C apoprotein to produce the mature functional cytochrome. This Schizosaccharomyces pombe (strain 972 / ATCC 24843) (Fission yeast) protein is Putative holocytochrome-c synthase.